The following is a 521-amino-acid chain: Circadian clock oscillator protein KaiC (521 aa).

KaiC domains follow at residues 1–248 and 262–521; these read MNEP…INIF and ARIS…LDEE. ATP contacts are provided by Gly50, Thr51, Gly52, Lys53, Thr54, Leu55, Ser90, Lys225, Leu226, Arg227, Thr229, His231, Thr241, Thr291, Gly292, Thr293, Gly294, Lys295, Thr296, and Leu297. Mg(2+) is bound at residue Thr54. Position 296 (Thr296) interacts with Mg(2+). Glu319 contributes to the Mg(2+) binding site. Residue Trp332 participates in ATP binding. A Phosphoserine; by autocatalysis modification is found at Ser432. Thr433 is modified (phosphothreonine; by autocatalysis). ATP is bound by residues Arg452, Lys458, Met459, Arg460, Ser462, His464, and Lys466.

The protein belongs to the KaiC family. In terms of assembly, homohexamer; hexamerization is dependent on ATP-binding. The KaiABC complex composition changes during the circadian cycle to control KaiC phosphorylation. Complexes KaiC(6), KaiA(2-4):KaiC(6), KaiB(6):KaiC(6) and KaiC(6):KaiB(6):KaiA(12) are among the most important forms, many form cooperatively. KaiC interacts with SasA, activating its autokinase function and leading to RpaA activation. The cofactor is Mg(2+). In terms of processing, phosphorylated on serine and threonine residues by autocatalysis. Has a 4 step phosphorylation cycle; the autokinase acts first on Thr-433, then Ser-432. When Ser-432 is modified KaiC switches to an autophosphatase mode, acting first on phospho-Thr-433 then phospho-Ser-432.

It carries out the reaction L-seryl-[protein] + ATP = O-phospho-L-seryl-[protein] + ADP + H(+). The catalysed reaction is L-threonyl-[protein] + ATP = O-phospho-L-threonyl-[protein] + ADP + H(+). The enzyme catalyses ATP + H2O = ADP + phosphate + H(+). With respect to regulation, the interaction with KaiA enhances its phosphorylation status, while the interaction with KaiB decreases it. Functionally, central component of the KaiABC oscillator complex, which constitutes the main circadian regulator in cyanobacteria. Complex composition changes during the circadian cycle to control KaiC phosphorylation. KaiA stimulates KaiC autophosphorylation, while KaiB sequesters KaiA, leading to KaiC autodephosphorylation. Clock output pathways impact the RpaA transcriptional regulator. KaiC enhances the autophosphorylation activity of SasA, which then transfers its phosphate group to RpaA to activate it. KaiB and KaiC together enhance the phospho-RpaA dephosphatase activity of CikA. In terms of biological role, has a weak, temperature-independent ATPase activity; ATPase activity defines the circadian period. The phosphorylation state of KaiC modulates its ATPase activity and effects KaiB binding. The protein is Circadian clock oscillator protein KaiC of Rippkaea orientalis (strain PCC 8801 / RF-1) (Cyanothece sp. (strain PCC 8801)).